The chain runs to 578 residues: Probable ATP-dependent RNA helicase DDX55 homolog (578 aa).

Positions 7-37 (PVALKTFREKLGPELLEVFDKSYKSFTDVQV) match the Q motif motif. The Helicase ATP-binding domain maps to 40–218 (GTHLLNLSDV…VFGLRNAKQV (179 aa)). An ATP-binding site is contributed by 53-60 (SPTGSGKT). Positions 166-169 (DEAD) match the DEAD box motif. The region spanning 231-393 (TLKNYYVECR…EIKVPTNNSR (163 aa)) is the Helicase C-terminal domain. Residues 507–557 (AAKDKKRREKEARKLKKMGGRFRNGGGTGRKAEEKKALKRKAEEEDDAQND) are disordered. The segment covering 510-526 (DKKRREKEARKLKKMGG) has biased composition (basic residues). Residues 536 to 549 (RKAEEKKALKRKAE) are compositionally biased toward basic and acidic residues.

Belongs to the DEAD box helicase family. DDX55/SPB4 subfamily.

It carries out the reaction ATP + H2O = ADP + phosphate + H(+). Functionally, probable ATP-binding RNA helicase. In Caenorhabditis elegans, this protein is Probable ATP-dependent RNA helicase DDX55 homolog.